Reading from the N-terminus, the 780-residue chain is Cullin-5 (780 aa).

Residue Ser34 is modified to Phosphoserine. Thr210 is modified (phosphothreonine). Residues 711–772 enclose the Cullin neddylation domain; it reads RILRTQEAII…HKYIRRDESD (62 aa). A Glycyl lysine isopeptide (Lys-Gly) (interchain with G-Cter in NEDD8) cross-link involves residue Lys724.

This sequence belongs to the cullin family. In terms of assembly, component of multiple cullin-5-RING E3 ubiquitin-protein ligase complexes (ECS complexes, also named CRL5 complexes) formed of CUL5, Elongin BC (ELOB and ELOC), RNF7/RBX2 and a variable SOCS box domain-containing protein as substrate-specific recognition component. CUL5-containing ECS complexes specifically contain RNF7/RBX2, and not RBX1, as catalytic subunit. Component of the ECS(ASB2) complex with the substrate recognition component ASB2. Component of the ECS(ASB6) complex with the substrate recognition component ASB6. Component of the ECS(ASB7) complex with the substrate recognition component ASB7. Component of the ECS(ASB9) complex with the substrate recognition component ASB9. Component of the ECS(ASB11) complex with the substrate recognition component ASB11. Component of the ECS(ASB12) complex with the substrate recognition component ASB12. Component of the ECS(LRRC41) complex with the substrate recognition component LRRC41. Component of the ECS(SOCS1) complex with the substrate recognition component SOCS1. Component of the ECS(SOCS2) complex with the substrate recognition component SOCS2. Component of the ECS(WSB1) complex with the substrate recognition subunit WSB1. Component of the ECS(SOCS3) complex with the substrate recognition component SOCS3. Component of the ECS(SOCS7) complex with the substrate recognition component SOCS7. Component of the ECS(SPSB1) complex with the substrate recognition component SPSB1. Component of the ECS(SPSB3) complex with the substrate recognition component SPSB3. Component of the ECS(SPSB2) complex with the substrate recognition component SPSB2. Component of the ECS(SPSB4) complex with the substrate recognition component SPSB4. Component of the ECS(RAB40) complex with the substrate recognition subunit RAB40A, RAB40B or RAB40C. Component of the ECS(KLHDC1) complex with the substrate recognition component KLHDC1. Component of the ECS(PCMTD1) complex with the substrate recognition subunit PCMTD1. May also form complexes containing RBX1 and ELOA or VHL; additional evidence is however required to confirm this result in vivo. Interacts (when neddylated) with ARIH2; leading to activate the E3 ligase activity of ARIH2. Interacts with ERCC6; the interaction is induced by DNA damaging agents or inhibitors of RNA polymerase II elongation. Interacts with ELOA (via the BC-box). Interacts (unneddylated form) with DCUN1D1, DCUN1D2, DCUN1D3, DCUN1D4 and DCUN1D5; these interactions promote the cullin neddylation. In terms of processing, neddylated; which enhances the ubiquitination activity of ECS complexes and prevents binding of the inhibitor CAND1. Deneddylated via its interaction with the COP9 signalosome (CSN).

It localises to the nucleus. Its pathway is protein modification; protein ubiquitination. In terms of biological role, core component of multiple cullin-5-RING E3 ubiquitin-protein ligase complexes (ECS complexes, also named CRL5 complexes), which mediate the ubiquitination and subsequent proteasomal degradation of target proteins. Acts a scaffold protein that contributes to catalysis through positioning of the substrate and the ubiquitin-conjugating enzyme. The functional specificity of the E3 ubiquitin-protein ligase complex depends on the variable SOCS box-containing substrate recognition component. Acts as a key regulator of neuron positioning during cortex development: component of various SOCS-containing ECS complexes, such as the ECS(SOCS7) complex, that regulate reelin signaling by mediating ubiquitination and degradation of DAB1. ECS(SOCS1) seems to direct ubiquitination of JAK2. The ECS(SOCS2) complex mediates the ubiquitination and subsequent proteasomal degradation of phosphorylated EPOR and GHR. The ECS(SPSB3) complex catalyzes ubiquitination of nuclear CGAS. ECS(KLHDC1) complex is part of the DesCEND (destruction via C-end degrons) pathway and mediates ubiquitination and degradation of truncated SELENOS selenoprotein produced by failed UGA/Sec decoding, which ends with a glycine. The ECS(ASB9) complex mediates ubiquitination and degradation of CKB. As part of some ECS complex, promotes 'Lys-11'-linked ubiquitination and degradation of BTRC. As part of a multisubunit ECS complex, polyubiquitinates monoubiquitinated POLR2A. As part of the ECS(RAB40C) complex, mediates ANKRD28 ubiquitination and degradation, thereby regulating protein phosphatase 6 (PP6) complex activity and focal adhesion assembly during cell migration. As part of the ECS(RAB40A) complex, mediates RHOU 'Lys-48'-linked ubiquitination and degradation, thus inhibiting focal adhesion disassembly during cell migration. As part of the ECS(RAB40B) complex, mediates LIMA1/EPLIN and RAP2 ubiquitination, thereby regulating actin cytoskeleton dynamics and stress fiber formation during cell migration. May form a cell surface vasopressin receptor. The sequence is that of Cullin-5 from Pongo abelii (Sumatran orangutan).